The primary structure comprises 39 residues: MTSSLSAFINSLLWGAIVVVIPLSAALLFISQKDKIQRN.

Residues 11 to 31 form a helical membrane-spanning segment; sequence SLLWGAIVVVIPLSAALLFIS.

It belongs to the PsbX family. Type 1 subfamily. As to quaternary structure, PSII is composed of 1 copy each of membrane proteins PsbA, PsbB, PsbC, PsbD, PsbE, PsbF, PsbH, PsbI, PsbJ, PsbK, PsbL, PsbM, PsbT, PsbX, PsbY, PsbZ, Psb30/Ycf12, at least 3 peripheral proteins of the oxygen-evolving complex and a large number of cofactors. It forms dimeric complexes.

The protein resides in the plastid. It localises to the cyanelle thylakoid membrane. Functionally, involved in the binding and/or turnover of quinones at the Q(B) site of photosystem II (PSII). PSII is a light-driven water plastoquinone oxidoreductase, using light energy to abstract electrons from H(2)O, generating a proton gradient subsequently used for ATP formation. This Cyanophora paradoxa protein is Photosystem II reaction center protein X.